A 528-amino-acid chain; its full sequence is RNA polymerase sigma factor SigA (528 aa).

Positions 1-10 (MAATKASTAT) are enriched in polar residues. A disordered region spans residues 1–211 (MAATKASTAT…FVWDEDESEA (211 aa)). Composition is skewed to low complexity over residues 19 to 31 (TKSPAASASGAKT), 38 to 56 (AKSASGSPPAKRATKPAAR), and 80 to 92 (AAKSAAAKAPSAR). Basic and acidic residues predominate over residues 100-109 (APKDAQHEAA). Residues 110–173 (TDPEDALDSV…DDEDHEDLEA (64 aa)) are compositionally biased toward acidic residues. A sigma-70 factor domain-2 region spans residues 295–365 (LLEANLRLVV…TRAMADQART (71 aa)). The Interaction with polymerase core subunit RpoC signature appears at 319-322 (DLIQ). Residues 374–450 (EVINKLGRIQ…DSEAVVAVDA (77 aa)) form a sigma-70 factor domain-3 region. Residues 463 to 516 (VLDTLSEREAGVVRLRFGLTDGQPRTLDEIGQVYGVTRERIRQIESKTMSKLRH) form a sigma-70 factor domain-4 region. A DNA-binding region (H-T-H motif) is located at residues 489–508 (LDEIGQVYGVTRERIRQIES).

Belongs to the sigma-70 factor family. RpoD/SigA subfamily. Interacts transiently with the RNA polymerase catalytic core.

Its subcellular location is the cytoplasm. Its function is as follows. Sigma factors are initiation factors that promote the attachment of RNA polymerase to specific initiation sites and are then released. This sigma factor is the primary sigma factor during exponential growth. In Mycobacterium bovis (strain ATCC BAA-935 / AF2122/97), this protein is RNA polymerase sigma factor SigA.